We begin with the raw amino-acid sequence, 114 residues long: Transmembrane protein 14C (114 aa).

4 helical membrane passes run L8 to I28, A33 to A53, V63 to N83, and P89 to L109.

It belongs to the TMEM14 family.

It localises to the mitochondrion membrane. Its function is as follows. Required for normal heme biosynthesis. In Mus musculus (Mouse), this protein is Transmembrane protein 14C (Tmem14c).